A 268-amino-acid chain; its full sequence is Undecaprenyl-diphosphatase (268 aa).

7 consecutive transmembrane segments (helical) span residues Pro41 to Phe61, Ile89 to Tyr109, Ile114 to Ile134, Leu155 to Ile175, Phe191 to Ser211, Phe218 to Ile238, and Asn248 to Leu268.

The protein belongs to the UppP family.

The protein resides in the cell inner membrane. The catalysed reaction is di-trans,octa-cis-undecaprenyl diphosphate + H2O = di-trans,octa-cis-undecaprenyl phosphate + phosphate + H(+). Functionally, catalyzes the dephosphorylation of undecaprenyl diphosphate (UPP). Confers resistance to bacitracin. This is Undecaprenyl-diphosphatase from Prochlorococcus marinus (strain MIT 9312).